We begin with the raw amino-acid sequence, 126 residues long: UPF0231 protein VC0395_A0134/VC395_0622 (126 aa).

The protein belongs to the UPF0231 family.

The protein is UPF0231 protein VC0395_A0134/VC395_0622 of Vibrio cholerae serotype O1 (strain ATCC 39541 / Classical Ogawa 395 / O395).